The following is a 1022-amino-acid chain: GPI ethanolamine phosphate transferase 1 (1022 aa).

Topologically, residues 1–6 (MARVGR) are cytoplasmic. Residues 7-27 (VGFLTLAVVFHLMYAYSIFDI) form a helical membrane-spanning segment. The Lumenal segment spans residues 28–466 (YFVSPIVSGM…LQTYDWLFLR (439 aa)). Residues Asn148 and Asn433 are each glycosylated (N-linked (GlcNAc...) asparagine). Residues 467–487 (TIVSLGYLGWIAYALTTVIDL) traverse the membrane as a helical segment. Over 488 to 498 (HVLHGKSESNR) the chain is Cytoplasmic. A helical membrane pass occupies residues 499-519 (TTFSIMFFSSILVALFSVLLY). At 520–560 (QGSSWRYYLYALFPIFFWEEVFARRKALLAGREILLGHVHS) the chain is on the lumenal side. A helical membrane pass occupies residues 561 to 581 (VSGYFAFAIQLLLYVGVLEAL). At 582–589 (VQSYFHRD) the chain is on the cytoplasmic side. A helical transmembrane segment spans residues 590 to 610 (IFTVCFILGGFWPITYGTKFL). At 611-614 (GQHK) the chain is on the lumenal side. The chain crosses the membrane as a helical span at residues 615–635 (LLSASWALGCFLMSIFTLLPA). Residues 636–640 (NKVED) lie on the Cytoplasmic side of the membrane. The helical transmembrane segment at 641–661 (MMMISCGSLLMFLTGLLYLIF) threads the bilayer. Residues 662–685 (ERSILGQKRSSDPNSVVSSCGSRT) are Lumenal-facing. Residues 686–706 (IMGAQVGMILLALIVTRSSVA) traverse the membrane as a helical segment. Over 707 to 713 (SLQAKQG) the chain is Cytoplasmic. The chain crosses the membrane as a helical span at residues 714–734 (LPLGNQVLGWAILVSSLLLPF). The Lumenal portion of the chain corresponds to 735–749 (LHRLYPNSHYLHRLM). A run of 2 helical transmembrane segments spans residues 750–770 (VIFLTFSPIFIILTISYEGLF) and 771–791 (YFVFCMTLLAWVRLEQAIYIH). Residues 792–837 (TTAPTREQDHSVANGSLPAKKPSPGNTVVVEGQPYRYRTLSVSDAR) are Lumenal-facing. Asn805 carries N-linked (GlcNAc...) asparagine glycosylation. The helical transmembrane segment at 838 to 858 (VALFFFFLLQSGFFSTGNIAS) threads the bilayer. At 859–880 (VSSFSLDSVYRLIPIFNPFAQG) the chain is on the cytoplasmic side. The helical transmembrane segment at 881–901 (ALLILKLLIPFAIISANLGIL) threads the bilayer. Residues 902 to 910 (NHRLEVAPS) are Lumenal-facing. The helical transmembrane segment at 911-931 (ALFMVVMSISDVMTLNFFYMV) threads the bilayer. At 932–947 (RDEGSWLEIGTTISHF) the chain is on the cytoplasmic side. A helical membrane pass occupies residues 948–968 (CIASFLCTFVAVLEFLSELFI). The Lumenal portion of the chain corresponds to 969 to 1022 (SGVDFGHPATTVGSAVAKAVNGSVACGHSPDSDISGEDSTSVGITAKADPDARS). Residue Asn989 is glycosylated (N-linked (GlcNAc...) asparagine). A disordered region spans residues 998–1022 (PDSDISGEDSTSVGITAKADPDARS).

This sequence belongs to the PIGG/PIGN/PIGO family. PIGN subfamily.

The protein resides in the endoplasmic reticulum membrane. It participates in glycolipid biosynthesis; glycosylphosphatidylinositol-anchor biosynthesis. Ethanolamine phosphate transferase involved in glycosylphosphatidylinositol-anchor biosynthesis. Transfers ethanolamine phosphate to the first alpha-1,4-linked mannose of the glycosylphosphatidylinositol precursor of GPI-anchor. The sequence is that of GPI ethanolamine phosphate transferase 1 (mcd4) from Aspergillus oryzae (strain ATCC 42149 / RIB 40) (Yellow koji mold).